We begin with the raw amino-acid sequence, 395 residues long: S-adenosylmethionine synthase (395 aa).

His-14 is an ATP binding site. Asp-16 lines the Mg(2+) pocket. Glu-42 serves as a coordination point for K(+). Residues Glu-55 and Gln-98 each coordinate L-methionine. Residues 98–108 (QSPDIALGVDK) form a flexible loop region. Residues 174–176 (DGK), 240–241 (RF), Asp-249, 255–256 (RK), Ala-272, and Lys-276 contribute to the ATP site. An L-methionine-binding site is contributed by Asp-249. Lys-280 is an L-methionine binding site.

This sequence belongs to the AdoMet synthase family. As to quaternary structure, homotetramer; dimer of dimers. It depends on Mg(2+) as a cofactor. The cofactor is K(+).

It is found in the cytoplasm. It catalyses the reaction L-methionine + ATP + H2O = S-adenosyl-L-methionine + phosphate + diphosphate. It participates in amino-acid biosynthesis; S-adenosyl-L-methionine biosynthesis; S-adenosyl-L-methionine from L-methionine: step 1/1. Its function is as follows. Catalyzes the formation of S-adenosylmethionine (AdoMet) from methionine and ATP. The overall synthetic reaction is composed of two sequential steps, AdoMet formation and the subsequent tripolyphosphate hydrolysis which occurs prior to release of AdoMet from the enzyme. The chain is S-adenosylmethionine synthase from Thermotoga neapolitana (strain ATCC 49049 / DSM 4359 / NBRC 107923 / NS-E).